The sequence spans 566 residues: Arginine--tRNA ligase (566 aa).

Residues 121-131 carry the 'HIGH' region motif; the sequence is ANPNGPFHIGH.

This sequence belongs to the class-I aminoacyl-tRNA synthetase family.

The protein localises to the cytoplasm. The enzyme catalyses tRNA(Arg) + L-arginine + ATP = L-arginyl-tRNA(Arg) + AMP + diphosphate. This is Arginine--tRNA ligase from Methanococcus maripaludis (strain C7 / ATCC BAA-1331).